The primary structure comprises 331 residues: Protein RecA (331 aa).

66-73 (GPESSGKT) is a binding site for ATP.

This sequence belongs to the RecA family.

It localises to the cytoplasm. Functionally, can catalyze the hydrolysis of ATP in the presence of single-stranded DNA, the ATP-dependent uptake of single-stranded DNA by duplex DNA, and the ATP-dependent hybridization of homologous single-stranded DNAs. It interacts with LexA causing its activation and leading to its autocatalytic cleavage. The protein is Protein RecA of Acholeplasma laidlawii (strain PG-8A).